A 145-amino-acid polypeptide reads, in one-letter code: Histone H2B.10 (145 aa).

Basic and acidic residues predominate over residues 1–15 (MAKADKKPAEKKPAE). The disordered stretch occupies residues 1–53 (MAKADKKPAEKKPAEKTPAAEPAAAAEKKPKAGKKLPKEPAGAGDKKKKRSKK). An N6-methyllysine modification is found at Lys-3. 2 positions are modified to N6-acetyllysine: Lys-6 and Lys-11. Position 12 is an N6,N6-dimethyllysine (Lys-12). N6-acetyllysine occurs at positions 16, 28, and 34. Positions 16–25 (KTPAAEPAAA) are enriched in low complexity. Lys-35 carries the N6-acetyllysine; partial modification. Residue Lys-141 forms a Glycyl lysine isopeptide (Lys-Gly) (interchain with G-Cter in ubiquitin) linkage.

The protein belongs to the histone H2B family. In terms of assembly, the nucleosome is a histone octamer containing two molecules each of H2A, H2B, H3 and H4 assembled in one H3-H4 heterotetramer and two H2A-H2B heterodimers. The octamer wraps approximately 147 bp of DNA. Interacts with ORTH2. In terms of processing, can be acetylated to form H2BK5ac, H2BK10ac, H2BK15ac, H2BK27ac, H2BK33ac and H2BK34ac. Dimethylated to form H2BK11me2. Post-translationally, monoubiquitinated by BRE1 to form H2BK143ub1 and deubiquitinated by UBP26. Required for heterochromatic histone H3 di- and trimethylation at H3K4me. May give a specific tag for epigenetic transcriptional activation.

Its subcellular location is the nucleus. It is found in the chromosome. Core component of nucleosome. Nucleosomes wrap and compact DNA into chromatin, limiting DNA accessibility to the cellular machineries which require DNA as a template. Histones thereby play a central role in transcription regulation, DNA repair, DNA replication and chromosomal stability. DNA accessibility is regulated via a complex set of post-translational modifications of histones, also called histone code, and nucleosome remodeling. The polypeptide is Histone H2B.10 (Arabidopsis thaliana (Mouse-ear cress)).